Here is a 309-residue protein sequence, read N- to C-terminus: 4-hydroxy-3-methylbut-2-enyl diphosphate reductase (309 aa).

C13 serves as a coordination point for [4Fe-4S] cluster. (2E)-4-hydroxy-3-methylbut-2-enyl diphosphate-binding residues include H42 and H75. Dimethylallyl diphosphate-binding residues include H42 and H75. Positions 42 and 75 each coordinate isopentenyl diphosphate. C97 serves as a coordination point for [4Fe-4S] cluster. Position 125 (H125) interacts with (2E)-4-hydroxy-3-methylbut-2-enyl diphosphate. Position 125 (H125) interacts with dimethylallyl diphosphate. H125 provides a ligand contact to isopentenyl diphosphate. The active-site Proton donor is E127. T165 serves as a coordination point for (2E)-4-hydroxy-3-methylbut-2-enyl diphosphate. Residue C195 coordinates [4Fe-4S] cluster. Positions 223, 224, 225, and 267 each coordinate (2E)-4-hydroxy-3-methylbut-2-enyl diphosphate. Residues S223, S224, N225, and S267 each coordinate dimethylallyl diphosphate. The isopentenyl diphosphate site is built by S223, S224, N225, and S267.

This sequence belongs to the IspH family. Requires [4Fe-4S] cluster as cofactor.

The enzyme catalyses isopentenyl diphosphate + 2 oxidized [2Fe-2S]-[ferredoxin] + H2O = (2E)-4-hydroxy-3-methylbut-2-enyl diphosphate + 2 reduced [2Fe-2S]-[ferredoxin] + 2 H(+). It carries out the reaction dimethylallyl diphosphate + 2 oxidized [2Fe-2S]-[ferredoxin] + H2O = (2E)-4-hydroxy-3-methylbut-2-enyl diphosphate + 2 reduced [2Fe-2S]-[ferredoxin] + 2 H(+). It functions in the pathway isoprenoid biosynthesis; dimethylallyl diphosphate biosynthesis; dimethylallyl diphosphate from (2E)-4-hydroxy-3-methylbutenyl diphosphate: step 1/1. Its pathway is isoprenoid biosynthesis; isopentenyl diphosphate biosynthesis via DXP pathway; isopentenyl diphosphate from 1-deoxy-D-xylulose 5-phosphate: step 6/6. Its function is as follows. Catalyzes the conversion of 1-hydroxy-2-methyl-2-(E)-butenyl 4-diphosphate (HMBPP) into a mixture of isopentenyl diphosphate (IPP) and dimethylallyl diphosphate (DMAPP). Acts in the terminal step of the DOXP/MEP pathway for isoprenoid precursor biosynthesis. In Chlamydia abortus (strain DSM 27085 / S26/3) (Chlamydophila abortus), this protein is 4-hydroxy-3-methylbut-2-enyl diphosphate reductase.